The sequence spans 260 residues: Shikimate dehydrogenase (NADP(+)) (260 aa).

Shikimate contacts are provided by residues 14-16 (SAS) and T60. The Proton acceptor role is filled by K64. Positions 85 and 100 each coordinate shikimate. NADP(+)-binding positions include 121-125 (GAGGA), 145-150 (NRTYER), and F201. Y203 lines the shikimate pocket. G225 contributes to the NADP(+) binding site.

This sequence belongs to the shikimate dehydrogenase family. In terms of assembly, homodimer.

It carries out the reaction shikimate + NADP(+) = 3-dehydroshikimate + NADPH + H(+). It functions in the pathway metabolic intermediate biosynthesis; chorismate biosynthesis; chorismate from D-erythrose 4-phosphate and phosphoenolpyruvate: step 4/7. Its function is as follows. Involved in the biosynthesis of the chorismate, which leads to the biosynthesis of aromatic amino acids. Catalyzes the reversible NADPH linked reduction of 3-dehydroshikimate (DHSA) to yield shikimate (SA). The polypeptide is Shikimate dehydrogenase (NADP(+)) (Pyrobaculum islandicum (strain DSM 4184 / JCM 9189 / GEO3)).